A 237-amino-acid polypeptide reads, in one-letter code: Ribosomal RNA large subunit methyltransferase E (237 aa).

Glycine 76, tryptophan 78, aspartate 99, aspartate 115, and aspartate 139 together coordinate S-adenosyl-L-methionine. Catalysis depends on lysine 179, which acts as the Proton acceptor.

This sequence belongs to the class I-like SAM-binding methyltransferase superfamily. RNA methyltransferase RlmE family.

Its subcellular location is the cytoplasm. The catalysed reaction is uridine(2552) in 23S rRNA + S-adenosyl-L-methionine = 2'-O-methyluridine(2552) in 23S rRNA + S-adenosyl-L-homocysteine + H(+). Specifically methylates the uridine in position 2552 of 23S rRNA at the 2'-O position of the ribose in the fully assembled 50S ribosomal subunit. This Rhodopseudomonas palustris (strain TIE-1) protein is Ribosomal RNA large subunit methyltransferase E.